We begin with the raw amino-acid sequence, 289 residues long: ATP phosphoribosyltransferase (289 aa).

The protein belongs to the ATP phosphoribosyltransferase family. Long subfamily. Mg(2+) serves as cofactor.

It is found in the cytoplasm. It catalyses the reaction 1-(5-phospho-beta-D-ribosyl)-ATP + diphosphate = 5-phospho-alpha-D-ribose 1-diphosphate + ATP. Its pathway is amino-acid biosynthesis; L-histidine biosynthesis; L-histidine from 5-phospho-alpha-D-ribose 1-diphosphate: step 1/9. Feedback inhibited by histidine. Functionally, catalyzes the condensation of ATP and 5-phosphoribose 1-diphosphate to form N'-(5'-phosphoribosyl)-ATP (PR-ATP). Has a crucial role in the pathway because the rate of histidine biosynthesis seems to be controlled primarily by regulation of HisG enzymatic activity. The sequence is that of ATP phosphoribosyltransferase from Solibacter usitatus (strain Ellin6076).